The primary structure comprises 324 residues: Beta-ketoacyl-[acyl-carrier-protein] synthase III (324 aa).

Catalysis depends on residues Cys-112 and His-249. An ACP-binding region spans residues 250–254; the sequence is QANRR. Asn-279 is an active-site residue.

Belongs to the thiolase-like superfamily. FabH family. As to quaternary structure, homodimer.

The protein localises to the cytoplasm. It catalyses the reaction malonyl-[ACP] + acetyl-CoA + H(+) = 3-oxobutanoyl-[ACP] + CO2 + CoA. Its pathway is lipid metabolism; fatty acid biosynthesis. In terms of biological role, catalyzes the condensation reaction of fatty acid synthesis by the addition to an acyl acceptor of two carbons from malonyl-ACP. Catalyzes the first condensation reaction which initiates fatty acid synthesis and may therefore play a role in governing the total rate of fatty acid production. Possesses both acetoacetyl-ACP synthase and acetyl transacylase activities. Its substrate specificity determines the biosynthesis of branched-chain and/or straight-chain of fatty acids. This is Beta-ketoacyl-[acyl-carrier-protein] synthase III from Streptococcus equi subsp. zooepidemicus (strain MGCS10565).